The sequence spans 118 residues: V-type proton ATPase subunit G 1 (118 aa).

Position 2 is an N-acetylalanine (A2).

Belongs to the V-ATPase G subunit family. V-ATPase is a heteromultimeric enzyme made up of two complexes: the ATP-hydrolytic V1 complex and the proton translocation V0 complex. The V1 complex consists of three catalytic AB heterodimers that form a heterohexamer, three peripheral stalks each consisting of EG heterodimers, one central rotor including subunits D and F, and the regulatory subunits C and H. The proton translocation complex V0 consists of the proton transport subunit a, a ring of proteolipid subunits c9c'', rotary subunit d, subunits e and f, and the accessory subunits ATP6AP1/Ac45 and ATP6AP2/PRR. In terms of tissue distribution, kidney; localizes to early distal nephron, encompassing thick ascending limbs and distal convoluted tubules (at protein level). Ubiquitous.

Its subcellular location is the apical cell membrane. Subunit of the V1 complex of vacuolar(H+)-ATPase (V-ATPase), a multisubunit enzyme composed of a peripheral complex (V1) that hydrolyzes ATP and a membrane integral complex (V0) that translocates protons. V-ATPase is responsible for acidifying and maintaining the pH of intracellular compartments and in some cell types, is targeted to the plasma membrane, where it is responsible for acidifying the extracellular environment. In aerobic conditions, involved in intracellular iron homeostasis, thus triggering the activity of Fe(2+) prolyl hydroxylase (PHD) enzymes, and leading to HIF1A hydroxylation and subsequent proteasomal degradation. This Homo sapiens (Human) protein is V-type proton ATPase subunit G 1 (ATP6V1G1).